The sequence spans 188 residues: Elongation factor P (188 aa).

This sequence belongs to the elongation factor P family.

The protein resides in the cytoplasm. It functions in the pathway protein biosynthesis; polypeptide chain elongation. Functionally, involved in peptide bond synthesis. Stimulates efficient translation and peptide-bond synthesis on native or reconstituted 70S ribosomes in vitro. Probably functions indirectly by altering the affinity of the ribosome for aminoacyl-tRNA, thus increasing their reactivity as acceptors for peptidyl transferase. The sequence is that of Elongation factor P from Chlorobaculum tepidum (strain ATCC 49652 / DSM 12025 / NBRC 103806 / TLS) (Chlorobium tepidum).